Here is a 358-residue protein sequence, read N- to C-terminus: UDP-N-acetylglucosamine--N-acetylmuramyl-(pentapeptide) pyrophosphoryl-undecaprenol N-acetylglucosamine transferase (358 aa).

Residues 11 to 13, R163, S191, I245, and Q290 contribute to the UDP-N-acetyl-alpha-D-glucosamine site; that span reads TGG.

The protein belongs to the glycosyltransferase 28 family. MurG subfamily.

The protein resides in the cell inner membrane. It catalyses the reaction di-trans,octa-cis-undecaprenyl diphospho-N-acetyl-alpha-D-muramoyl-L-alanyl-D-glutamyl-meso-2,6-diaminopimeloyl-D-alanyl-D-alanine + UDP-N-acetyl-alpha-D-glucosamine = di-trans,octa-cis-undecaprenyl diphospho-[N-acetyl-alpha-D-glucosaminyl-(1-&gt;4)]-N-acetyl-alpha-D-muramoyl-L-alanyl-D-glutamyl-meso-2,6-diaminopimeloyl-D-alanyl-D-alanine + UDP + H(+). Its pathway is cell wall biogenesis; peptidoglycan biosynthesis. Its function is as follows. Cell wall formation. Catalyzes the transfer of a GlcNAc subunit on undecaprenyl-pyrophosphoryl-MurNAc-pentapeptide (lipid intermediate I) to form undecaprenyl-pyrophosphoryl-MurNAc-(pentapeptide)GlcNAc (lipid intermediate II). This chain is UDP-N-acetylglucosamine--N-acetylmuramyl-(pentapeptide) pyrophosphoryl-undecaprenol N-acetylglucosamine transferase, found in Janthinobacterium sp. (strain Marseille) (Minibacterium massiliensis).